The sequence spans 88 residues: Alpha-latrotoxin-associated low molecular weight protein (88 aa).

The signal sequence occupies residues M1–A18.

Belongs to the arthropod CHH/MIH/GIH/VIH hormone family. Expressed by the venom gland.

It is found in the secreted. In terms of biological role, may increase the toxicity of alpha-latrotoxin and/or other venom components. Is non-toxic to mice and to the cockroach Periplaneta americana. This Latrodectus tredecimguttatus (Mediterranean black widow spider) protein is Alpha-latrotoxin-associated low molecular weight protein.